Consider the following 521-residue polypeptide: MSSRPFESPPPYRPDEFKPNHYAPSNDVYGGDMHVRPMLSQPAYSFYPEDEILHFYKWTSPPGVIRILSMLVIVMCIAIFGCVASTLAWDRGYGTGLMGGSIGYPYGSGFGSYGTGYGYGFGYGYGYGGYTDPRAAKGFLLAMVAFCFIAALVIFVTSVIRSDISRTRRYYLTVIILSAFLGVMMFIATIVYIMGVNPTAQASGSLYSSQIYAMCNQFYASTATGLYMDQYLYHYCVVDPQEAIAIVLGFMVIVAFALIIFFAVKTRRKMDRYDKSNILWDKEHIYDEQPPNVEEWVKNVSAGTQDMPPPPSDYVERVDSPMAYSSNGKVNDKRLYPESSYKSTPVPEVVQELPATSPADDFRQPRYSSSGHLEPPSKRAPSKGRTGRPKRLEQDHYETDYTTGGESCDELEEDWIREYPPITSDQQRQLYKRNFDTGLQEYKSLQAELDEINKELSRLDKELDDYREESEEYMAAADEYNRLKQVKGSPDYKNKRNYCKQLKSKLSHIKKMVGDYDRQKT.

The Cytoplasmic segment spans residues 1–66 (MSSRPFESPP…KWTSPPGVIR (66 aa)). The region spanning 60-268 (SPPGVIRILS…IIFFAVKTRR (209 aa)) is the MARVEL domain. A helical membrane pass occupies residues 67–89 (ILSMLVIVMCIAIFGCVASTLAW). Residues 90 to 134 (DRGYGTGLMGGSIGYPYGSGFGSYGTGYGYGFGYGYGYGGYTDPR) lie on the Extracellular side of the membrane. A helical membrane pass occupies residues 135–159 (AAKGFLLAMVAFCFIAALVIFVTSV). At 160–169 (IRSDISRTRR) the chain is on the cytoplasmic side. The chain crosses the membrane as a helical span at residues 170–194 (YYLTVIILSAFLGVMMFIATIVYIM). Residues 195–242 (GVNPTAQASGSLYSSQIYAMCNQFYASTATGLYMDQYLYHYCVVDPQE) lie on the Extracellular side of the membrane. Cys-215 and Cys-236 are joined by a disulfide. The helical transmembrane segment at 243 to 264 (AIAIVLGFMVIVAFALIIFFAV) threads the bilayer. At 265–521 (KTRRKMDRYD…MVGDYDRQKT (257 aa)) the chain is on the cytoplasmic side. Ser-301 bears the Phosphoserine mark. Positions 301–407 (SAGTQDMPPP…ETDYTTGGES (107 aa)) are disordered. At Thr-304 the chain carries Phosphothreonine. 3 positions are modified to phosphoserine: Ser-312, Ser-320, and Ser-339. A Phosphotyrosine modification is found at Tyr-367. Ser-368 and Ser-369 each carry phosphoserine. Residues 380–389 (APSKGRTGRP) are compositionally biased toward basic residues. The segment covering 390–399 (KRLEQDHYET) has biased composition (basic and acidic residues). Tyr-397 and Tyr-401 each carry phosphotyrosine. Residues Thr-402 and Thr-403 each carry the phosphothreonine; by PKC/PRKCH modification. Ser-407 carries the post-translational modification Phosphoserine. One can recognise an OCEL domain in the interval 413 to 521 (EDWIREYPPI…MVGDYDRQKT (109 aa)). Residues 424-488 (SDQQRQLYKR…EYNRLKQVKG (65 aa)) adopt a coiled-coil conformation. Phosphoserine is present on Ser-489.

It belongs to the ELL/occludin family. Interacts with TJP1/ZO1. Interacts with VAPA. Interacts with CLDN1, CLDN6, CLDN9, CLDN11, CLDN12 and CLDN17. Interacts with PLSCR1. Interacts with LSR, ILDR1 and ILDR2. Interacts with TJP2/ZO2. Post-translationally, dephosphorylated by PTPRJ. Less-phosphorylated forms are found in basolateral membrane, cytosol and tight junction. More-heavily phosphorylated forms are concentrated exclusively in tight junction. As to expression, localized at tight junctions of both epithelial and endothelial cells.

The protein localises to the cell membrane. Its subcellular location is the cell junction. It is found in the tight junction. In terms of biological role, may play a role in the formation and regulation of the tight junction (TJ) paracellular permeability barrier. Interacts with ZO-1. The sequence is that of Occludin (OCLN) from Canis lupus familiaris (Dog).